Reading from the N-terminus, the 363-residue chain is Phospho-N-acetylmuramoyl-pentapeptide-transferase (363 aa).

10 consecutive transmembrane segments (helical) span residues 27–47, 76–96, 97–117, 137–157, 171–191, 202–222, 242–262, 265–285, 292–312, and 340–360; these read SGCACLTALVISLALGNPFIA, TMGGMLILIALFSATLLWADL, TNGFVWAVMLTTAAFGAVGFA, LGCEFLASLIAGIWLQSLTPP, VLLPLGYAFPIFAMITITGFG, GLAIVPVVIAALVFALISYLV, LAVFCAALIGAGLGFLWFNAP, AVFMGDTGSLSLGGALGAVAV, VLCIVGGVFVAETLSVVIQIF, and KIVIRFWIVSIVLGLCGLATL.

Belongs to the glycosyltransferase 4 family. MraY subfamily. It depends on Mg(2+) as a cofactor.

Its subcellular location is the cell inner membrane. It carries out the reaction UDP-N-acetyl-alpha-D-muramoyl-L-alanyl-gamma-D-glutamyl-meso-2,6-diaminopimeloyl-D-alanyl-D-alanine + di-trans,octa-cis-undecaprenyl phosphate = di-trans,octa-cis-undecaprenyl diphospho-N-acetyl-alpha-D-muramoyl-L-alanyl-D-glutamyl-meso-2,6-diaminopimeloyl-D-alanyl-D-alanine + UMP. It functions in the pathway cell wall biogenesis; peptidoglycan biosynthesis. Its function is as follows. Catalyzes the initial step of the lipid cycle reactions in the biosynthesis of the cell wall peptidoglycan: transfers peptidoglycan precursor phospho-MurNAc-pentapeptide from UDP-MurNAc-pentapeptide onto the lipid carrier undecaprenyl phosphate, yielding undecaprenyl-pyrophosphoryl-MurNAc-pentapeptide, known as lipid I. The polypeptide is Phospho-N-acetylmuramoyl-pentapeptide-transferase (Gluconobacter oxydans (strain 621H) (Gluconobacter suboxydans)).